A 154-amino-acid polypeptide reads, in one-letter code: Histone H2B.v3 (154 aa).

Residues 1–11 (MVFVKGQKKAT) show a composition bias toward basic residues. The interval 1–48 (MVFVKGQKKATKGSTQSGEEKTASTTPKVTKTPTEGGEKKRKKRKSDY) is disordered. Polar residues predominate over residues 12–27 (KGSTQSGEEKTASTTP).

This sequence belongs to the histone H2B family. The nucleosome is a histone octamer containing two molecules each of H2A, H2B, H3 and H4 assembled in one H3-H4 heterotetramer and two H2A-H2B heterodimers. The octamer wraps approximately 147 bp of DNA.

It is found in the nucleus. Its subcellular location is the chromosome. Its function is as follows. Core component of nucleosome which plays a central role in DNA double strand break (DSB) repair. Nucleosomes wrap and compact DNA into chromatin, limiting DNA accessibility to the cellular machineries which require DNA as a template. Histones thereby play a central role in transcription regulation, DNA repair, DNA replication and chromosomal stability. DNA accessibility is regulated via a complex set of post-translational modifications of histones, also called histone code, and nucleosome remodeling. In Dictyostelium discoideum (Social amoeba), this protein is Histone H2B.v3 (H2Bv3).